Here is a 313-residue protein sequence, read N- to C-terminus: Small ribosomal subunit protein uS2 (313 aa).

At serine 2 the chain carries N-acetylserine. Laminin-binding regions lie at residues 161–180 (IPCN…MLAR) and 205–229 (RDPE…EFQG). [DE]-W-[ST] repeat units follow at residues 230–232 (EWS) and 245–247 (DWS). The tract at residues 242-313 (EVADWSEGVA…DWGGTTSDWS (72 aa)) is laminin-binding. Positions 262–274 (PATAAAAAAAAPP) are enriched in low complexity. Residues 262 to 313 (PATAAAAAAAAPPVKTGEVFSEDWSTQPATDDWSTAPTAQASDWGGTTSDWS) are disordered. [DE]-W-[ST] repeat units follow at residues 284-286 (DWS), 293-295 (DWS), and 311-313 (DWS). Residues 284 to 313 (DWSTQPATDDWSTAPTAQASDWGGTTSDWS) are compositionally biased toward polar residues.

It belongs to the universal ribosomal protein uS2 family. Monomer (37LRP) and homodimer (67LR). Component of the small ribosomal subunit. Mature ribosomes consist of a small (40S) and a large (60S) subunit. The 40S subunit contains about 33 different proteins and 1 molecule of RNA (18S). The 60S subunit contains about 49 different proteins and 3 molecules of RNA (28S, 5.8S and 5S). Interacts with rps21. Interacts with several laminins including at least lamb1. Interacts with mdk. Acylated. Acylation may be a prerequisite for conversion of the monomeric 37 kDa laminin receptor precursor (37LRP) to the mature dimeric 67 kDa laminin receptor (67LR), and may provide a mechanism for membrane association. Post-translationally, cleaved by stromelysin-3 (ST3) at the cell surface. Cleavage by stromelysin-3 may be a mechanism to alter cell-extracellular matrix interactions.

The protein resides in the cell membrane. It is found in the cytoplasm. The protein localises to the nucleus. In terms of biological role, required for the assembly and/or stability of the 40S ribosomal subunit. Required for the processing of the 20S rRNA-precursor to mature 18S rRNA in a late step of the maturation of 40S ribosomal subunits. Also functions as a cell surface receptor for laminin. Plays a role in cell adhesion to the basement membrane and in the consequent activation of signaling transduction pathways. May play a role in cell fate determination and tissue morphogenesis. This chain is Small ribosomal subunit protein uS2 (rpsa), found in Solea senegalensis (Senegalese sole).